We begin with the raw amino-acid sequence, 380 residues long: MKNVSILGSTGSIGTQTLDVIRRNADINVVALAAGTRVSDLAEQVREFKPQLVCIGKEELVPELKTLIGDMDVKIVSGDEGLIEAATIESAEIVVTAVVGMMGITPTVEAIKAHKDIALANKETLVCAGHIIMSLAKECNVNIYPVDSEHSAIFQCLNGERRGEIEKILLTASGGPFRGKKRADLENVQLEDALKHPNWAMGRKITIDSSTMVNKGLEVMEAQWLFGVPAEKVQVIVQPQSIIHSMVEFKDGAVMAQLGSPDMRLPIQYALYYPERRKLNTERLDFYELAKITFEKPDMETFKGLKLAYEAAARGGNIPTALNAANEVAVARFLDRKIKYLDIPDIIEYAMNEVDYINNPTVEQILSTQKIVTDMIESRW.

Positions 10, 11, 12, 13, 35, and 121 each coordinate NADPH. A 1-deoxy-D-xylulose 5-phosphate-binding site is contributed by K122. Position 123 (E123) interacts with NADPH. D147 lines the Mn(2+) pocket. Residues S148, E149, S173, and H196 each coordinate 1-deoxy-D-xylulose 5-phosphate. E149 lines the Mn(2+) pocket. G202 provides a ligand contact to NADPH. Residues S209, N214, K215, and E218 each contribute to the 1-deoxy-D-xylulose 5-phosphate site. A Mn(2+)-binding site is contributed by E218.

The protein belongs to the DXR family. The cofactor is Mg(2+). Mn(2+) is required as a cofactor.

The enzyme catalyses 2-C-methyl-D-erythritol 4-phosphate + NADP(+) = 1-deoxy-D-xylulose 5-phosphate + NADPH + H(+). It participates in isoprenoid biosynthesis; isopentenyl diphosphate biosynthesis via DXP pathway; isopentenyl diphosphate from 1-deoxy-D-xylulose 5-phosphate: step 1/6. In terms of biological role, catalyzes the NADPH-dependent rearrangement and reduction of 1-deoxy-D-xylulose-5-phosphate (DXP) to 2-C-methyl-D-erythritol 4-phosphate (MEP). This chain is 1-deoxy-D-xylulose 5-phosphate reductoisomerase, found in Lachnospira eligens (strain ATCC 27750 / DSM 3376 / VPI C15-48 / C15-B4) (Eubacterium eligens).